An 84-amino-acid polypeptide reads, in one-letter code: Sec-independent protein translocase protein TatA (84 aa).

A helical membrane pass occupies residues 1–21; that stretch reads MGGISIWQLLIIAVIVILLFG. The tract at residues 40 to 84 is disordered; the sequence is KKAMSDEDKPADKKDADFEPKNIEQQKTEASAETTAETKKDKEQA. 2 stretches are compositionally biased toward basic and acidic residues: residues 42–66 and 75–84; these read AMSDEDKPADKKDADFEPKNIEQQK and AETKKDKEQA.

This sequence belongs to the TatA/E family. In terms of assembly, the Tat system comprises two distinct complexes: a TatABC complex, containing multiple copies of TatA, TatB and TatC subunits, and a separate TatA complex, containing only TatA subunits. Substrates initially bind to the TatABC complex, which probably triggers association of the separate TatA complex to form the active translocon.

It is found in the cell inner membrane. Functionally, part of the twin-arginine translocation (Tat) system that transports large folded proteins containing a characteristic twin-arginine motif in their signal peptide across membranes. TatA could form the protein-conducting channel of the Tat system. This chain is Sec-independent protein translocase protein TatA, found in Vibrio atlanticus (strain LGP32) (Vibrio splendidus (strain Mel32)).